The chain runs to 475 residues: Aspartate ammonia-lyase (475 aa).

T104, S143, T144, N145, T190, and H191 together coordinate L-aspartate. The interval 320–329 (GSSIMPGKVN) is SS loop. S321 serves as the catalytic Proton acceptor. Residues S322 and K327 each coordinate L-aspartate.

It belongs to the class-II fumarase/aspartase family. Aspartase subfamily. As to quaternary structure, homotetramer.

It carries out the reaction L-aspartate = fumarate + NH4(+). In terms of biological role, catalyzes the reversible conversion of L-aspartate to fumarate and ammonia. In Bacillus subtilis (strain 168), this protein is Aspartate ammonia-lyase.